Consider the following 347-residue polypeptide: Protein RecA (347 aa).

65–72 (GPESSGKT) is a binding site for ATP.

This sequence belongs to the RecA family.

The protein resides in the cytoplasm. Its function is as follows. Can catalyze the hydrolysis of ATP in the presence of single-stranded DNA, the ATP-dependent uptake of single-stranded DNA by duplex DNA, and the ATP-dependent hybridization of homologous single-stranded DNAs. It interacts with LexA causing its activation and leading to its autocatalytic cleavage. This Marinobacter nauticus (strain ATCC 700491 / DSM 11845 / VT8) (Marinobacter aquaeolei) protein is Protein RecA.